The following is a 373-amino-acid chain: P2Y purinoceptor 1 (373 aa).

Topologically, residues 1–51 (MTEVPWSVVPNGTDAAFLAGLGSLWGNSTVASTAAVSSSFQCALTKTGFQF) are extracellular. N-linked (GlcNAc...) asparagine glycans are attached at residues Asn-11 and Asn-27. Disulfide bonds link Cys-42–Cys-296 and Cys-124–Cys-202. Lys-46 contacts ADP. The chain crosses the membrane as a helical span at residues 52–74 (YYLPAVYILVFIIGFLGNSVAIW). Topologically, residues 75–87 (MFVFHMKPWSGIS) are cytoplasmic. Residues 88 to 109 (VYMFNLALADFLYVLTLPALIF) traverse the membrane as a helical segment. Residues 110-125 (YYFNKTDWIFGDAMCK) lie on the Extracellular side of the membrane. The N-linked (GlcNAc...) asparagine glycan is linked to Asn-113. The chain crosses the membrane as a helical span at residues 126–147 (LQRFIFHVNLYGSILFLTCISA). The Cytoplasmic segment spans residues 148 to 166 (HRYSGVVYPLKSLGRLKKK). Residues 167–188 (NAIYVSVLVWLIVVVAISPILF) traverse the membrane as a helical segment. The Extracellular portion of the chain corresponds to 189-214 (YSGTGTRKNKTVTCYDTTSNDYLRSY). N-linked (GlcNAc...) asparagine glycosylation occurs at Asn-197. Residue 203-205 (YDT) coordinates ADP. The helical transmembrane segment at 215-237 (FIYSMCTTVAMFCIPLVLILGCY) threads the bilayer. The Cytoplasmic segment spans residues 238 to 260 (GLIVKALIYNDLDNSPLRRKSIY). The helical transmembrane segment at 261 to 284 (LVIIVLTVFAVSYIPFHVMKTMNL) threads the bilayer. ADP-binding positions include 283–287 (NLRAR), 303–306 (YATY), and Arg-310. Topologically, residues 285-303 (RARLDFQTPEMCDFNDRVY) are extracellular. The helical transmembrane segment at 304 to 325 (ATYQVTRGLASLNSCVDPILYF) threads the bilayer. The Cytoplasmic segment spans residues 326-373 (LAGDTFRRRLSRATRKASRRSEANLQSKSEEMTLNILSEFKQNGDTSL).

It belongs to the G-protein coupled receptor 1 family.

It localises to the cell membrane. Its function is as follows. Receptor for extracellular adenine nucleotides such as ADP. In platelets, binding to ADP leads to mobilization of intracellular calcium ions via activation of phospholipase C, a change in platelet shape, and ultimately platelet aggregation. In Mus musculus (Mouse), this protein is P2Y purinoceptor 1 (P2ry1).